Here is a 531-residue protein sequence, read N- to C-terminus: RCC1 and BTB domain-containing protein 1 (531 aa).

RCC1 repeat units follow at residues 40–91, 93–145, 147–198, 199–250, 252–302, and 304–356; these read NDEV…LLST, DGVV…ALAA, GEVF…AVLD, NGEV…ALTD, GLLY…AAKT, and GGHV…FLTV. BTB domains are found at residues 370–437 and 470–499; these read ADLK…DLPP and ENAFSLFSAAVRYDAEDLEEFCFKFCINHL.

In terms of tissue distribution, ubiquitously expressed. In the retina, present in the nerve fiber layer and to a lesser extent in the inner and outer plexiform layers (at protein level).

It localises to the nucleus. Functionally, may be involved in cell cycle regulation by chromatin remodeling. In Homo sapiens (Human), this protein is RCC1 and BTB domain-containing protein 1 (RCBTB1).